Consider the following 312-residue polypeptide: tRNA dimethylallyltransferase (312 aa).

Position 10–17 (10–17 (GPTGVGKT)) interacts with ATP. 12–17 (TGVGKT) lines the substrate pocket.

This sequence belongs to the IPP transferase family. Monomer. Mg(2+) serves as cofactor.

The catalysed reaction is adenosine(37) in tRNA + dimethylallyl diphosphate = N(6)-dimethylallyladenosine(37) in tRNA + diphosphate. Functionally, catalyzes the transfer of a dimethylallyl group onto the adenine at position 37 in tRNAs that read codons beginning with uridine, leading to the formation of N6-(dimethylallyl)adenosine (i(6)A). In Coprothermobacter proteolyticus (strain ATCC 35245 / DSM 5265 / OCM 4 / BT), this protein is tRNA dimethylallyltransferase.